A 207-amino-acid polypeptide reads, in one-letter code: Serotype 2 fimbrial subunit (207 aa).

An N-terminal signal peptide occupies residues 1–26 (MQIPFQRALRLCLRAALAAIASAAHA). Cysteine 42 and cysteine 85 are disulfide-bonded.

This sequence belongs to the fimbrial protein family.

The protein localises to the fimbrium. Functionally, bordetella pertussis is the causative agent of whooping cough. An essential step in the disease process is the attachment of the bacteria to the ciliated epithelium of the respiratory tract, enabling the organism to resist normal host-clearance mechanisms. It is unclear which bacterial cell surface component are responsible for adherence but the fimbriae of B.pertussis are prime candidates for being involved in this process. This is Serotype 2 fimbrial subunit (fim2) from Bordetella pertussis (strain Tohama I / ATCC BAA-589 / NCTC 13251).